The chain runs to 1287 residues: DNA-directed RNA polymerase subunit beta (1287 aa).

Belongs to the RNA polymerase beta chain family. The RNAP catalytic core consists of 2 alpha, 1 beta, 1 beta' and 1 omega subunit. When a sigma factor is associated with the core the holoenzyme is formed, which can initiate transcription.

It carries out the reaction RNA(n) + a ribonucleoside 5'-triphosphate = RNA(n+1) + diphosphate. DNA-dependent RNA polymerase catalyzes the transcription of DNA into RNA using the four ribonucleoside triphosphates as substrates. The chain is DNA-directed RNA polymerase subunit beta from Mycoplasma capricolum subsp. capricolum (strain California kid / ATCC 27343 / NCTC 10154).